A 1432-amino-acid chain; its full sequence is Gag-Pol polyprotein (1432 aa).

Residue Gly-2 is the site of N-myristoyl glycine; by host attachment. Residues 7–31 (ILSGGKLDDWEKIRLRPGGKKQYRI) form an interaction with Gp41 region. Residues 8–43 (LSGGKLDDWEKIRLRPGGKKQYRIKHLVWASRELDR) are interaction with host CALM1. The segment at 12–19 (KLDDWEKI) is interaction with host AP3D1. The segment at 14-33 (DDWEKIRLRPGGKKQYRIKH) is interaction with membrane phosphatidylinositol 4,5-bisphosphate and RNA. The short motif at 16–22 (WEKIRLR) is the Nuclear export signal element. The short motif at 26-32 (KKQYRIK) is the Nuclear localization signal element. An interaction with membrane phosphatidylinositol 4,5-bisphosphate region spans residues 73-77 (EEIKS). Tyr-132 carries the phosphotyrosine; by host modification. An interaction with human PPIA/CYPA and NUP153 region spans residues 189–227 (NTIGGHQAAMQMLKDTINEEAAEWDRVHPVHAGPVAPGQ). The segment at 277–363 (YSPVSILDIR…GGPGHKARVL (87 aa)) is dimerization/Multimerization of capsid protein p24. 2 consecutive CCHC-type zinc fingers follow at residues 389 to 406 (VKCF…NCRA) and 410 to 427 (KGCW…DCTE). Positions 443–482 (EAREFSPEQTRANSPTSREPRVRRGDPLPETGAEGQGTVS) are disordered. Positions 449–459 (PEQTRANSPTS) are enriched in polar residues. A compositionally biased stretch (basic and acidic residues) spans 460–469 (REPRVRRGDP). Residues 486-490 (PQITL) form a dimerization of protease region. One can recognise a Peptidase A2 domain in the interval 505–574 (REALLDTGAD…TPVNIIGRNM (70 aa)). The active-site For protease activity; shared with dimeric partner is the Asp-510. 2 dimerization of protease regions span residues 534-540 (GIGGFIK) and 573-585 (NMLT…LNFP). The region spanning 628–818 (EGKISRIGPE…PPFLWMGYEL (191 aa)) is the Reverse transcriptase domain. Mg(2+) is bound by residues Asp-694, Asp-769, and Asp-770. The RT 'primer grip' stretch occupies residues 811–819 (FLWMGYELH). The short motif at 982 to 998 (WETWWTDYWQATWIPEW) is the Tryptophan repeat motif element. One can recognise an RNase H type-1 domain in the interval 1018-1141 (IMGAETFYVD…VDKLVSSGIR (124 aa)). Mg(2+) contacts are provided by Asp-1027, Glu-1062, Asp-1082, and Asp-1133. The segment at 1147-1188 (DGIDKAQEEHEKYHSNWRAMASDFNLPPVVAKEIVASCDKCQ) adopts an Integrase-type zinc-finger fold. Positions 1156, 1160, 1184, and 1187 each coordinate Zn(2+). The Integrase catalytic domain maps to 1198–1348 (VDCSPGIWQL…SAGERIIDII (151 aa)). Mg(2+)-binding residues include Asp-1208, Asp-1260, and Glu-1296. The integrase-type DNA-binding region spans 1367-1414 (FRVYYRDSRDPIWKGPAKLLWKGEGAVVIQDNSEIKVVPRRKAKIIRD).

Homotrimer; further assembles as hexamers of trimers. Interacts with gp41 (via C-terminus). Interacts with host CALM1; this interaction induces a conformational change in the Matrix protein, triggering exposure of the myristate group. Interacts with host AP3D1; this interaction allows the polyprotein trafficking to multivesicular bodies during virus assembly. Part of the pre-integration complex (PIC) which is composed of viral genome, matrix protein, Vpr and integrase. In terms of assembly, homodimer; the homodimer further multimerizes as homohexamers or homopentamers. Interacts with human PPIA/CYPA; This interaction stabilizes the capsid. Interacts with human NUP153. Interacts with host PDZD8; this interaction stabilizes the capsid. Interacts with monkey TRIM5; this interaction destabilizes the capsid. As to quaternary structure, homodimer, whose active site consists of two apposed aspartic acid residues. Heterodimer of p66 RT and p51 RT (RT p66/p51). Heterodimerization of RT is essential for DNA polymerase activity. The overall folding of the subdomains is similar in p66 RT and p51 RT but the spatial arrangements of the subdomains are dramatically different. In terms of assembly, homotetramer; may further associate as a homohexadecamer. Part of the pre-integration complex (PIC) which is composed of viral genome, matrix protein, Vpr and integrase. Interacts with human SMARCB1/INI1 and human PSIP1/LEDGF isoform 1. Interacts with human KPNA3; this interaction might play a role in nuclear import of the pre-integration complex. Interacts with human NUP153; this interaction might play a role in nuclear import of the pre-integration complex. Mg(2+) is required as a cofactor. Post-translationally, specific enzymatic cleavages by the viral protease yield mature proteins. The protease is released by autocatalytic cleavage. The polyprotein is cleaved during and after budding, this process is termed maturation. Proteolytic cleavage of p66 RT removes the RNase H domain to yield the p51 RT subunit. Nucleocapsid protein p7 might be further cleaved after virus entry. In terms of processing, tyrosine phosphorylated presumably in the virion by a host kinase. Phosphorylation is apparently not a major regulator of membrane association. Phosphorylated possibly by host MAPK1; this phosphorylation is necessary for Pin1-mediated virion uncoating. Post-translationally, methylated by host PRMT6, impairing its function by reducing RNA annealing and the initiation of reverse transcription.

The protein resides in the host cell membrane. It is found in the host endosome. The protein localises to the host multivesicular body. Its subcellular location is the virion membrane. It localises to the host nucleus. The protein resides in the host cytoplasm. It is found in the virion. It carries out the reaction Specific for a P1 residue that is hydrophobic, and P1' variable, but often Pro.. The enzyme catalyses Endohydrolysis of RNA in RNA/DNA hybrids. Three different cleavage modes: 1. sequence-specific internal cleavage of RNA. Human immunodeficiency virus type 1 and Moloney murine leukemia virus enzymes prefer to cleave the RNA strand one nucleotide away from the RNA-DNA junction. 2. RNA 5'-end directed cleavage 13-19 nucleotides from the RNA end. 3. DNA 3'-end directed cleavage 15-20 nucleotides away from the primer terminus.. The catalysed reaction is 3'-end directed exonucleolytic cleavage of viral RNA-DNA hybrid.. It catalyses the reaction DNA(n) + a 2'-deoxyribonucleoside 5'-triphosphate = DNA(n+1) + diphosphate. Its activity is regulated as follows. Protease: The viral protease is inhibited by many synthetic protease inhibitors (PIs), such as amprenavir, atazanavir, indinavir, loprinavir, nelfinavir, ritonavir and saquinavir. Use of protease inhibitors in tritherapy regimens permit more ambitious therapeutic strategies. Reverse transcriptase/ribonuclease H: RT can be inhibited either by nucleoside RT inhibitors (NRTIs) or by non nucleoside RT inhibitors (NNRTIs). NRTIs act as chain terminators, whereas NNRTIs inhibit DNA polymerization by binding a small hydrophobic pocket near the RT active site and inducing an allosteric change in this region. Classical NRTIs are abacavir, adefovir (PMEA), didanosine (ddI), lamivudine (3TC), stavudine (d4T), tenofovir (PMPA), zalcitabine (ddC), and zidovudine (AZT). Classical NNRTIs are atevirdine (BHAP U-87201E), delavirdine, efavirenz (DMP-266), emivirine (I-EBU), and nevirapine (BI-RG-587). The tritherapies used as a basic effective treatment of AIDS associate two NRTIs and one NNRTI. Functionally, mediates, with Gag polyprotein, the essential events in virion assembly, including binding the plasma membrane, making the protein-protein interactions necessary to create spherical particles, recruiting the viral Env proteins, and packaging the genomic RNA via direct interactions with the RNA packaging sequence (Psi). Gag-Pol polyprotein may regulate its own translation, by the binding genomic RNA in the 5'-UTR. At low concentration, the polyprotein would promote translation, whereas at high concentration, the polyprotein would encapsidate genomic RNA and then shut off translation. In terms of biological role, targets the polyprotein to the plasma membrane via a multipartite membrane-binding signal, that includes its myristoylated N-terminus. Matrix protein is part of the pre-integration complex. Implicated in the release from host cell mediated by Vpu. Binds to RNA. Its function is as follows. Forms the conical core that encapsulates the genomic RNA-nucleocapsid complex in the virion. Most core are conical, with only 7% tubular. The core is constituted by capsid protein hexamer subunits. The core is disassembled soon after virion entry. Host restriction factors such as TRIM5-alpha or TRIMCyp bind retroviral capsids and cause premature capsid disassembly, leading to blocks in reverse transcription. Capsid restriction by TRIM5 is one of the factors which restricts HIV-1 to the human species. Host PIN1 apparently facilitates the virion uncoating. On the other hand, interactions with PDZD8 or CYPA stabilize the capsid. Encapsulates and protects viral dimeric unspliced genomic RNA (gRNA). Binds these RNAs through its zinc fingers. Acts as a nucleic acid chaperone which is involved in rearangement of nucleic acid secondary structure during gRNA retrotranscription. Also facilitates template switch leading to recombination. As part of the polyprotein, participates in gRNA dimerization, packaging, tRNA incorporation and virion assembly. Functionally, aspartyl protease that mediates proteolytic cleavages of Gag and Gag-Pol polyproteins during or shortly after the release of the virion from the plasma membrane. Cleavages take place as an ordered, step-wise cascade to yield mature proteins. This process is called maturation. Displays maximal activity during the budding process just prior to particle release from the cell. Also cleaves Nef and Vif, probably concomitantly with viral structural proteins on maturation of virus particles. Hydrolyzes host EIF4GI and PABP1 in order to shut off the capped cellular mRNA translation. The resulting inhibition of cellular protein synthesis serves to ensure maximal viral gene expression and to evade host immune response. Also mediates cleavage of host YTHDF3. Mediates cleavage of host CARD8, thereby activating the CARD8 inflammasome, leading to the clearance of latent HIV-1 in patient CD4(+) T-cells after viral reactivation; in contrast, HIV-1 can evade CARD8-sensing when its protease remains inactive in infected cells prior to viral budding. In terms of biological role, multifunctional enzyme that converts the viral RNA genome into dsDNA in the cytoplasm, shortly after virus entry into the cell. This enzyme displays a DNA polymerase activity that can copy either DNA or RNA templates, and a ribonuclease H (RNase H) activity that cleaves the RNA strand of RNA-DNA heteroduplexes in a partially processive 3' to 5' endonucleasic mode. Conversion of viral genomic RNA into dsDNA requires many steps. A tRNA(3)-Lys binds to the primer-binding site (PBS) situated at the 5'-end of the viral RNA. RT uses the 3' end of the tRNA primer to perform a short round of RNA-dependent minus-strand DNA synthesis. The reading proceeds through the U5 region and ends after the repeated (R) region which is present at both ends of viral RNA. The portion of the RNA-DNA heteroduplex is digested by the RNase H, resulting in a ssDNA product attached to the tRNA primer. This ssDNA/tRNA hybridizes with the identical R region situated at the 3' end of viral RNA. This template exchange, known as minus-strand DNA strong stop transfer, can be either intra- or intermolecular. RT uses the 3' end of this newly synthesized short ssDNA to perform the RNA-dependent minus-strand DNA synthesis of the whole template. RNase H digests the RNA template except for two polypurine tracts (PPTs) situated at the 5'-end and near the center of the genome. It is not clear if both polymerase and RNase H activities are simultaneous. RNase H probably can proceed both in a polymerase-dependent (RNA cut into small fragments by the same RT performing DNA synthesis) and a polymerase-independent mode (cleavage of remaining RNA fragments by free RTs). Secondly, RT performs DNA-directed plus-strand DNA synthesis using the PPTs that have not been removed by RNase H as primers. PPTs and tRNA primers are then removed by RNase H. The 3' and 5' ssDNA PBS regions hybridize to form a circular dsDNA intermediate. Strand displacement synthesis by RT to the PBS and PPT ends produces a blunt ended, linear dsDNA copy of the viral genome that includes long terminal repeats (LTRs) at both ends. Its function is as follows. Catalyzes viral DNA integration into the host chromosome, by performing a series of DNA cutting and joining reactions. This enzyme activity takes place after virion entry into a cell and reverse transcription of the RNA genome in dsDNA. The first step in the integration process is 3' processing. This step requires a complex comprising the viral genome, matrix protein, Vpr and integrase. This complex is called the pre-integration complex (PIC). The integrase protein removes 2 nucleotides from each 3' end of the viral DNA, leaving recessed CA OH's at the 3' ends. In the second step, the PIC enters cell nucleus. This process is mediated through integrase and Vpr proteins, and allows the virus to infect a non dividing cell. This ability to enter the nucleus is specific of lentiviruses, other retroviruses cannot and rely on cell division to access cell chromosomes. In the third step, termed strand transfer, the integrase protein joins the previously processed 3' ends to the 5' ends of strands of target cellular DNA at the site of integration. The 5'-ends are produced by integrase-catalyzed staggered cuts, 5 bp apart. A Y-shaped, gapped, recombination intermediate results, with the 5'-ends of the viral DNA strands and the 3' ends of target DNA strands remaining unjoined, flanking a gap of 5 bp. The last step is viral DNA integration into host chromosome. This involves host DNA repair synthesis in which the 5 bp gaps between the unjoined strands are filled in and then ligated. Since this process occurs at both cuts flanking the HIV genome, a 5 bp duplication of host DNA is produced at the ends of HIV-1 integration. Alternatively, Integrase may catalyze the excision of viral DNA just after strand transfer, this is termed disintegration. The protein is Gag-Pol polyprotein (gag-pol) of Homo sapiens (Human).